Here is a 246-residue protein sequence, read N- to C-terminus: Large ribosomal subunit protein uL30 (246 aa).

This sequence belongs to the universal ribosomal protein uL30 family.

In terms of biological role, binds to G-rich structures in 28S rRNA and in mRNAs. Plays a regulatory role in the translation apparatus; inhibits cell-free translation of mRNAs. This chain is Large ribosomal subunit protein uL30 (rpl7), found in Dictyostelium discoideum (Social amoeba).